Reading from the N-terminus, the 272-residue chain is Ras-related protein RSR1 (272 aa).

10-17 (GAGGVGKS) serves as a coordination point for GTP. An Effector region motif is present at residues 32-40 (YDPTIEDSY). GTP is bound by residues 57-61 (DTAGI) and 116-119 (NKAD). The segment at 177–272 (DARNQSQQFS…KKNASTCTIL (96 aa)) is disordered. Composition is skewed to polar residues over residues 180-232 (NQSQ…STPV) and 245-258 (SGSS…ATSQ). At C269 the chain carries Cysteine methyl ester. The S-geranylgeranyl cysteine moiety is linked to residue C269. Positions 270 to 272 (TIL) are cleaved as a propeptide — removed in mature form.

It belongs to the small GTPase superfamily. Ras family.

It is found in the cell membrane. The catalysed reaction is GTP + H2O = GDP + phosphate + H(+). Alternates between an inactive form bound to GDP and an active form bound to GTP. Activated by a guanine nucleotide-exchange factor (GEF) and inactivated by a GTPase-activating protein (GAP). Ras-related protein which binds GDP/GTP and possesses intrinsic GTPase activity. Involved in development of cell polarity during the cell division cycle, and essential for bud emergence. The protein is Ras-related protein RSR1 of Saccharomyces cerevisiae (strain ATCC 204508 / S288c) (Baker's yeast).